Here is a 955-residue protein sequence, read N- to C-terminus: MLPGRLCWVPLLLALGVGSGSGGGGDSRQRRLLAAKVNKHKPWIETSYHGVITENNDTVILDPPLVALDKDAPVPFAGEICAFKIHGQELPFEAVVLNKTSGEGRLRAKSPIDCELQKEYTFIIQAYDCGAGPHETAWKKSHKAVVHIQVKDVNEFAPTFKEPAYKAVVTEGKIYDSILQVEAIDEDCSPQYSQICNYEIVTTDVPFAIDRNGNIRNTEKLSYDKQHQYEILVTAYDCGQKPAAQDTLVQVDVKPVCKPGWQDWTKRIEYQPGSGSMPLFPSIHLETCDGAVSSLQIVTELQTNYIGKGCDRETYSEKSLQKLCGASSGIIDLLPSPSAATNWTAGLLVDSSEMIFKFDGRQGAKVPDGIVPKNLTDQFTITMWMKHGPSPGVRAEKETILCNSDKTEMNRHHYALYVHNCRLVFLLRKDFDQADTFRPAEFHWKLDQICDKEWHYYVINVEFPVVTLYMDGATYEPYLVTNDWPIHPSHIAMQLTVGACWQGGEVTKPQFAQFFHGSLASLTIRPGKMESQKVISCLQACKEGLDINSLESLGQGIKYHFNPSQSILVMEGDDIGNINRALQKVSYINSRQFPTAGVRRLKVSSKVQCFGEDVCISIPEVDAYVMVLQAIEPRITLRGTDHFWRPAAQFESARGVTLFPDIKIVSTFAKTEAPGDVKTTDPKSEVLEEMLHNLDFCDILVIGGDLDPRQECLELNHSELHQRHLDATNSTAGYSIYGVGSMSRYEQVLHHIRYRNWRPASLEARRFRIKCSELNGRYTSNEFNLEVSILHEDQVSDKEHVNHLIVQPPFLQSVHHPESRSSIQHSSVVPSIATVVIIISVCMLVFVVAMGVYRVRIAHQHFIQETEAAKESEMDWDDSALTITVNPMEKHEGPGHGEDETEGEEEEEAEEEMSSSSGSDDSEEEEEEEGMGRGRHGQNGARQAQLEWDDSTLPY.

The first 20 residues, 1-20, serve as a signal peptide directing secretion; sequence MLPGRLCWVPLLLALGVGSG. At 21–831 the chain is on the extracellular side; sequence SGGGGDSRQR…SIQHSSVVPS (811 aa). Cadherin domains follow at residues 44 to 160 and 161 to 280; these read IETS…APTF and KEPA…MPLF. N56 and N98 each carry an N-linked (GlcNAc...) asparagine glycan. Residues N342, N374, N716, and N729 are each glycosylated (N-linked (GlcNAc...) asparagine). The chain crosses the membrane as a helical span at residues 832–852; the sequence is IATVVIIISVCMLVFVVAMGV. The Cytoplasmic segment spans residues 853–955; sequence YRVRIAHQHF…LEWDDSTLPY (103 aa). Residues 887-955 form a disordered region; the sequence is PMEKHEGPGH…LEWDDSTLPY (69 aa). Over residues 888-898 the composition is skewed to basic and acidic residues; sequence MEKHEGPGHGE. 2 stretches are compositionally biased toward acidic residues: residues 899-913 and 920-929; these read DETE…EEEM and DDSEEEEEEE.

This sequence belongs to the calsyntenin family. Proteolytically processed under normal cellular conditions. A primary zeta-cleavage generates a large extracellular (soluble) N-terminal domain (sAlc) and a short C-terminal transmembrane fragment (CTF1). A secondary cleavage catalyzed by gamma-secretase within the transmembrane domain releases the beta-Alc-gamma chain in the extracellular milieu and produces an intracellular fragment (AlcICD). This processing is strongly suppressed in the tripartite complex formed with APBA2 and APP, which seems to prevent the association with PSEN1. As to expression, restricted to the brain.

It is found in the postsynaptic cell membrane. The protein localises to the endoplasmic reticulum membrane. The protein resides in the golgi apparatus membrane. Its subcellular location is the cell projection. It localises to the dendrite. Postsynaptic adhesion molecule that binds to presynaptic neurexins to mediate synapse formation, and which is involved in learning and memory. Promotes synapse development by acting as a cell adhesion molecule at the postsynaptic membrane, which associates with neurexin-alpha at the presynaptic membrane. The sequence is that of Calsyntenin-2 from Homo sapiens (Human).